The chain runs to 292 residues: ATP synthase gamma chain (292 aa).

The protein belongs to the ATPase gamma chain family. F-type ATPases have 2 components, CF(1) - the catalytic core - and CF(0) - the membrane proton channel. CF(1) has five subunits: alpha(3), beta(3), gamma(1), delta(1), epsilon(1). CF(0) has three main subunits: a, b and c.

It is found in the cell membrane. In terms of biological role, produces ATP from ADP in the presence of a proton gradient across the membrane. The gamma chain is believed to be important in regulating ATPase activity and the flow of protons through the CF(0) complex. This Streptococcus mutans serotype c (strain ATCC 700610 / UA159) protein is ATP synthase gamma chain.